The chain runs to 404 residues: Cysteine desulfurase IscS (404 aa).

Residues 75 to 76 (AT), Asn-155, Gln-183, and 203 to 205 (SAH) each bind pyridoxal 5'-phosphate. Position 206 is an N6-(pyridoxal phosphate)lysine (Lys-206). Thr-243 contacts pyridoxal 5'-phosphate. Cys-328 functions as the Cysteine persulfide intermediate in the catalytic mechanism. Residue Cys-328 coordinates [2Fe-2S] cluster.

The protein belongs to the class-V pyridoxal-phosphate-dependent aminotransferase family. NifS/IscS subfamily. In terms of assembly, homodimer. Forms a heterotetramer with IscU, interacts with other sulfur acceptors. Pyridoxal 5'-phosphate is required as a cofactor.

The protein resides in the cytoplasm. It carries out the reaction (sulfur carrier)-H + L-cysteine = (sulfur carrier)-SH + L-alanine. It participates in cofactor biosynthesis; iron-sulfur cluster biosynthesis. Its function is as follows. Master enzyme that delivers sulfur to a number of partners involved in Fe-S cluster assembly, tRNA modification or cofactor biosynthesis. Catalyzes the removal of elemental sulfur atoms from cysteine to produce alanine. Functions as a sulfur delivery protein for Fe-S cluster synthesis onto IscU, an Fe-S scaffold assembly protein, as well as other S acceptor proteins. In Pseudomonas aeruginosa (strain UCBPP-PA14), this protein is Cysteine desulfurase IscS.